Consider the following 369-residue polypeptide: Gap junction alpha-5 protein (369 aa).

Residues 2–19 lie on the Cytoplasmic side of the membrane; the sequence is GDWSFLGEFLEEVHKHST. The chain crosses the membrane as a helical span at residues 20 to 40; the sequence is VVGKVWLTVLFIFRMLVLGTA. Residues 41 to 76 are Extracellular-facing; that stretch reads AGPLWGDEQSDFMCDTQQPGCENVCYDKAFPISHVR. The helical transmembrane segment at 77–97 threads the bilayer; it reads FWVLQIIFVSTPSLVYMGHAM. Over 98–169 the chain is Cytoplasmic; it reads HTVRMEEKRK…YSILIRTAME (72 aa). A helical transmembrane segment spans residues 170 to 190; sequence IAFIVGQYILYGIFLETLYIC. At 191 to 210 the chain is on the extracellular side; that stretch reads QRAPCPHPVNCYVSRPTEKN. Residues 211–231 form a helical membrane-spanning segment; that stretch reads VFIIFMLAVAVLSLFLSLAEL. At 232-369 the chain is on the cytoplasmic side; it reads YHLGWKKAKE…SKARSDDLSV (138 aa). A disordered region spans residues 347–369; that stretch reads NEKRRFSKASRASSKARSDDLSV.

This sequence belongs to the connexin family. Alpha-type (group II) subfamily. As to quaternary structure, a connexon is composed of a hexamer of connexins. In terms of tissue distribution, mostly in heart, and in the whole embryo, liver, stomach, and pectoral muscle.

The protein resides in the cell membrane. The protein localises to the cell junction. It is found in the gap junction. One gap junction consists of a cluster of closely packed pairs of transmembrane channels, the connexons, through which materials of low MW diffuse from one cell to a neighboring cell. The polypeptide is Gap junction alpha-5 protein (GJA5) (Gallus gallus (Chicken)).